The chain runs to 367 residues: NADH-quinone oxidoreductase subunit H (367 aa).

Transmembrane regions (helical) follow at residues 19–39 (ALFIKIIAVIISVMISVAYLV), 87–107 (ICFLIAPIITFTLALLGWAVI), 132–152 (IGVLYILAISSLGVYGIIIAG), 178–198 (IGLTIVTVLLATGSLKLGEIV), 204–224 (MPYWIDLLLLPMACIFFISAL), 266–286 (ILINAMAVIFFFGGWYPPLNI), 291–311 (IIPGIVWFVLKVVALLFCFIW), and 328–348 (GWKVFLPISLLWVVLVSSILV).

This sequence belongs to the complex I subunit 1 family. NDH-1 is composed of 14 different subunits. Subunits NuoA, H, J, K, L, M, N constitute the membrane sector of the complex.

It localises to the cell inner membrane. It catalyses the reaction a quinone + NADH + 5 H(+)(in) = a quinol + NAD(+) + 4 H(+)(out). In terms of biological role, NDH-1 shuttles electrons from NADH, via FMN and iron-sulfur (Fe-S) centers, to quinones in the respiratory chain. The immediate electron acceptor for the enzyme in this species is believed to be ubiquinone. Couples the redox reaction to proton translocation (for every two electrons transferred, four hydrogen ions are translocated across the cytoplasmic membrane), and thus conserves the redox energy in a proton gradient. This subunit may bind ubiquinone. The chain is NADH-quinone oxidoreductase subunit H from Ehrlichia chaffeensis (strain ATCC CRL-10679 / Arkansas).